The primary structure comprises 120 residues: Large ribosomal subunit protein uL18 (120 aa).

This sequence belongs to the universal ribosomal protein uL18 family. Part of the 50S ribosomal subunit; part of the 5S rRNA/L5/L18/L25 subcomplex. Contacts the 5S and 23S rRNAs.

Functionally, this is one of the proteins that bind and probably mediate the attachment of the 5S RNA into the large ribosomal subunit, where it forms part of the central protuberance. The protein is Large ribosomal subunit protein uL18 of Bradyrhizobium sp. (strain BTAi1 / ATCC BAA-1182).